The chain runs to 940 residues: MEEDEFSKAYDPKGLEDKLYAFWEGSGMFTAQSASDKPPYAIIMPPPNVTGILHMGHALVNTLQDVLIRYKRMSGFEVCWVPGTDHAGIATQTVVERHLYASLGKRRIDFSREEFIKHVWEWKEKSEGVILSQLRQLGCSCDWSRLRFTMEPLANRAVKKAFKALFDKGHIYRGYYLVNWDPVLQTALADDEVEYEEKDGWLYYIRYKVVDSSEEIIVATTRPETLLGDTAIAISPDDERYSHLLGAKVHLPFVDREIPIIGDMSVDPLFGTGAVKITPAHDRDDYRTGINHNLPMVNILAPTGEINENGGIFAGLSKEKAREDIITALEAMGLFVKKEPYKLRVGVSYRSGAVIEPYLSKQWFVSVESFRDSLREFVANDSIKIFPPEFTRNYLSWVNNLRDWCISRQLWWGHRIPVWYHKSDEDRILCYDGEGIPEEVAQDPDSWYQDPDVLDTWFSSGLWPLTCLGWPDVESGDLEKFYPTAVLITGHDILFFWVTRMVLLCSAMVEEKPFSDVFLHGLIFGKSYKRYNDLGEWTYISGEEKHAYDMGKALPKDVVAKWEKLSKSKGNVIDPLEMIGKYGADAVRMTLCSCANRGEQIDLDYRLFEEYKNFANKIWNGARFIFGHISNLTSKDLVYGIDKDLLGLEDFYILDGFNQLLKQLESAYQSYAFDKITTMAYEFFRNDFCSTYIEIIKPTLYGKQGNEEDRLTKQKLLAVLLVNILGVLHPITPFVTETLFLKLKATLGDVDAPCADTITAHALDMLRAESYVVAPYPQAIDIAIPKDLHESFALAERLVYTIRNIRGEMQLDPRASLEVFVICPEGISIETYVPMMCALGGIASLEYLSEEPKDRVYSLGVVEGIRLGVFVPMEHITKERNRLEKEKMRLENSIESVSRLLSSESFRAKANPDLVRSKEETLKNNRMELQSILDKLASFS.

A 'HIGH' region motif is present at residues 47–57 (PNVTGILHMGH). Residues 564-568 (KLSKS) carry the 'KMSKS' region motif. Lys567 is an ATP binding site. The stretch at 872-938 (PMEHITKERN…LQSILDKLAS (67 aa)) forms a coiled coil.

The protein belongs to the class-I aminoacyl-tRNA synthetase family. ValS type 1 subfamily. As to quaternary structure, monomer.

It localises to the cytoplasm. The enzyme catalyses tRNA(Val) + L-valine + ATP = L-valyl-tRNA(Val) + AMP + diphosphate. Functionally, catalyzes the attachment of valine to tRNA(Val). As ValRS can inadvertently accommodate and process structurally similar amino acids such as threonine, to avoid such errors, it has a 'posttransfer' editing activity that hydrolyzes mischarged Thr-tRNA(Val) in a tRNA-dependent manner. This chain is Valine--tRNA ligase, found in Chlamydia caviae (strain ATCC VR-813 / DSM 19441 / 03DC25 / GPIC) (Chlamydophila caviae).